Reading from the N-terminus, the 576-residue chain is Low-affinity glucose transporter HXT4 (576 aa).

Residues 1–56 are disordered; that stretch reads MSEEAAYQEDTAVQNTPADALSPVESDSNSALSTPSNKAERDDMKDFDENHEESNN. At 1–66 the chain is on the cytoplasmic side; the sequence is MSEEAAYQED…YVEIPKKPAS (66 aa). Polar residues predominate over residues 25–37; the sequence is ESDSNSALSTPSN. Residues 38–54 are compositionally biased toward basic and acidic residues; that stretch reads KAERDDMKDFDENHEES. Lysine 45 participates in a covalent cross-link: Glycyl lysine isopeptide (Lys-Gly) (interchain with G-Cter in ubiquitin). A helical transmembrane segment spans residues 67–87; sequence AYVTVSICCLMVAFGGFVFGW. The Extracellular portion of the chain corresponds to 88–122; the sequence is DTGTISGFVAQTDFIRRFGMKHHDGTYYLSKVRTG. A helical transmembrane segment spans residues 123-143; sequence LMVSIINIGCAIGGIILAKLG. Residues 144–149 lie on the Cytoplasmic side of the membrane; the sequence is DMYGRK. Residues 150 to 170 form a helical membrane-spanning segment; it reads MGLIVVVVIYIIGIIIQIASI. Over 171–180 the chain is Extracellular; the sequence is NKWYQYFIGR. A helical transmembrane segment spans residues 181-201; that stretch reads IISGLGVGGIAVLSPMLISEV. The Cytoplasmic segment spans residues 202–207; sequence SPKHIR. Residues 208 to 228 form a helical membrane-spanning segment; the sequence is GTLVSCYQLMITLGIFLGYCT. Residues 229 to 242 are Extracellular-facing; sequence NYGTKTYTNSVQWR. The chain crosses the membrane as a helical span at residues 243–263; that stretch reads VPLGLGFAWALFMIGGMTFVP. The Cytoplasmic segment spans residues 264 to 346; that stretch reads ESPRYLVEVG…IQSLQQLTGD (83 aa). The helical transmembrane segment at 347–363 threads the bilayer; sequence NYFFYYGTTVFTAVGLS. Over 364–369 the chain is Extracellular; that stretch reads DSFETS. A helical membrane pass occupies residues 370-387; that stretch reads IVLGIVNFASTFVGIFLV. Residues 388–394 are Cytoplasmic-facing; that stretch reads ERYGRRR. Residues 395–415 traverse the membrane as a helical segment; that stretch reads CLLWGAASMTACMVVFASVGV. At 416–437 the chain is on the extracellular side; it reads TRLWPNGKKNGSSKGAGNCMIV. Asparagine 425 is a glycosylation site (N-linked (GlcNAc...) asparagine). A helical transmembrane segment spans residues 438–458; the sequence is FTCFYLFCFATTWAPIPFVVN. Residues 459 to 475 are Cytoplasmic-facing; sequence SETFPLRVKSKCMAIAQ. Residues 476-496 traverse the membrane as a helical segment; sequence ACNWIWGFLIGFFTPFISNAI. Position 497 (aspartate 497) is a topological domain, extracellular. Residues 498 to 518 form a helical membrane-spanning segment; that stretch reads FYYGYVFMGCLVFSYFYVFFF. Residues 519 to 576 are Cytoplasmic-facing; sequence VPETKGLTLEEVNTLWEEGVLPWKSPSWVPPNKRGTDYNADDLMHDDQPFYKKMFGKK.

It belongs to the major facilitator superfamily. Sugar transporter (TC 2.A.1.1) family.

It localises to the cell membrane. Xylose uptake is strongly inhibited by glucose. Its function is as follows. Low-affinity glucose transporter. Can also transport xylose. The sequence is that of Low-affinity glucose transporter HXT4 (HXT4) from Saccharomyces cerevisiae (strain JAY291) (Baker's yeast).